We begin with the raw amino-acid sequence, 217 residues long: Large ribosomal subunit protein eL14 (217 aa).

Position 79 is an N6-acetyllysine (K79). K85 carries the post-translational modification N6-acetyllysine; alternate. K85 is modified (N6-succinyllysine; alternate). K124 is covalently cross-linked (Glycyl lysine isopeptide (Lys-Gly) (interchain with G-Cter in SUMO2)). S139 bears the Phosphoserine mark. The tract at residues 162 to 217 is disordered; that stretch reads KVPAKKATGPGKKAAGQKAPAQKAAGQKAAPPAKGQKGQKTPAQKAPAPKAAGKKA. A 1-1; approximate repeat occupies 173–177; sequence KKAAG. A 4 X 5 AA tandem repeats of Q-K-A-[APS]-X region spans residues 173 to 192; sequence KKAAGQKAPAQKAAGQKAAP. Repeat copies occupy residues 178-182, 183-187, 188-192, 195-197, and 198-200. A 2 X 3 AA tandem repeats of K-G-Q region spans residues 195–200; that stretch reads KGQKGQ. An N6-succinyllysine modification is found at K206.

Belongs to the eukaryotic ribosomal protein eL14 family. Component of the large ribosomal subunit.

It localises to the cytoplasm. Component of the large ribosomal subunit. The ribosome is a large ribonucleoprotein complex responsible for the synthesis of proteins in the cell. In Mus musculus (Mouse), this protein is Large ribosomal subunit protein eL14 (Rpl14).